The following is a 540-amino-acid chain: Chaperonin GroEL (540 aa).

Residues 29–32 (TLGP), 86–90 (DGTTT), Gly413, 476–478 (NAA), and Asp492 contribute to the ATP site.

The protein belongs to the chaperonin (HSP60) family. As to quaternary structure, forms a cylinder of 14 subunits composed of two heptameric rings stacked back-to-back. Interacts with the co-chaperonin GroES.

Its subcellular location is the cytoplasm. The catalysed reaction is ATP + H2O + a folded polypeptide = ADP + phosphate + an unfolded polypeptide.. Functionally, together with its co-chaperonin GroES, plays an essential role in assisting protein folding. The GroEL-GroES system forms a nano-cage that allows encapsulation of the non-native substrate proteins and provides a physical environment optimized to promote and accelerate protein folding. This is Chaperonin GroEL from Streptococcus agalactiae.